We begin with the raw amino-acid sequence, 77 residues long: Acyl carrier protein (77 aa).

Residues 1–76 (MAVFDDVRDV…DVVNYIEKLG (76 aa)) enclose the Carrier domain. Ser-36 carries the O-(pantetheine 4'-phosphoryl)serine modification.

This sequence belongs to the acyl carrier protein (ACP) family. In terms of processing, 4'-phosphopantetheine is transferred from CoA to a specific serine of apo-ACP by AcpS. This modification is essential for activity because fatty acids are bound in thioester linkage to the sulfhydryl of the prosthetic group.

The protein resides in the cytoplasm. Its pathway is lipid metabolism; fatty acid biosynthesis. In terms of biological role, carrier of the growing fatty acid chain in fatty acid biosynthesis. In Campylobacter curvus (strain 525.92), this protein is Acyl carrier protein.